A 644-amino-acid polypeptide reads, in one-letter code: Threonine--tRNA ligase (644 aa).

A TGS domain is found at 1–61 (MPDIQLPDGS…DQDAEVAIVT (61 aa)). A catalytic region spans residues 242–535 (DHRRIGTELE…LIEHYEGKFP (294 aa)). 3 residues coordinate Zn(2+): C335, H386, and H512.

It belongs to the class-II aminoacyl-tRNA synthetase family. In terms of assembly, homodimer. It depends on Zn(2+) as a cofactor.

The protein resides in the cytoplasm. The enzyme catalyses tRNA(Thr) + L-threonine + ATP = L-threonyl-tRNA(Thr) + AMP + diphosphate + H(+). Its function is as follows. Catalyzes the attachment of threonine to tRNA(Thr) in a two-step reaction: L-threonine is first activated by ATP to form Thr-AMP and then transferred to the acceptor end of tRNA(Thr). Also edits incorrectly charged L-seryl-tRNA(Thr). The sequence is that of Threonine--tRNA ligase from Acidithiobacillus ferrooxidans (strain ATCC 23270 / DSM 14882 / CIP 104768 / NCIMB 8455) (Ferrobacillus ferrooxidans (strain ATCC 23270)).